The following is a 168-amino-acid chain: Peroxynitrite isomerase (168 aa).

A GXWXGXG motif is present at residues 25-31 (GTWRGAG). His160 contacts heme b.

Belongs to the nitrobindin family. In terms of assembly, homodimer. The cofactor is heme b.

It carries out the reaction peroxynitrite = nitrate. The protein operates within nitrogen metabolism. In terms of biological role, heme-binding protein able to scavenge peroxynitrite and to protect free L-tyrosine against peroxynitrite-mediated nitration, by acting as a peroxynitrite isomerase that converts peroxynitrite to nitrate. Therefore, this protein likely plays a role in peroxynitrite sensing and in the detoxification of reactive nitrogen and oxygen species (RNS and ROS, respectively). Is able to bind nitric oxide (NO) in vitro, but may act as a sensor of peroxynitrite levels in vivo. This chain is Peroxynitrite isomerase, found in Nocardia farcinica (strain IFM 10152).